Here is a 421-residue protein sequence, read N- to C-terminus: 2-deoxystreptamine N-acetyl-D-glucosaminyltransferase (421 aa).

The protein belongs to the glycosyltransferase group 1 family. Glycosyltransferase 4 subfamily.

It carries out the reaction 2-deoxystreptamine + UDP-N-acetyl-alpha-D-glucosamine = 2'-N-acetylparomamine + UDP + H(+). Its pathway is antibiotic biosynthesis; neomycin biosynthesis. Glycosyltransferase involved in the biosynthesis of neomycin by mediating conversion of 2-deoxystreptamine (2-DOS) to 2'-N-acetylparomamine using UDP-alpha-D-glucosamine as sugar donor. The chain is 2-deoxystreptamine N-acetyl-D-glucosaminyltransferase (neoD) from Streptomyces fradiae (Streptomyces roseoflavus).